Here is a 171-residue protein sequence, read N- to C-terminus: Ferritin heavy chain (171 aa).

N-acetylmethionine is present on Met-1. Thr-2 carries the N-acetylthreonine; in Ferritin heavy chain, N-terminally processed modification. In terms of domain architecture, Ferritin-like diiron spans 11-160 (QNYHQDSEAA…DHITNLRKMG (150 aa)). Fe cation-binding residues include Glu-28, Glu-63, His-66, Glu-108, and Gln-142.

The protein belongs to the ferritin family. In terms of assembly, oligomer of 24 subunits. There are two types of subunits: L (light) chain and H (heavy) chain. The major chain can be light or heavy, depending on the species and tissue type. The functional molecule forms a roughly spherical shell with a diameter of 12 nm and contains a central cavity into which the insoluble mineral iron core is deposited. Interacts with NCOA4; NCOA4 promotes targeting of the iron-binding ferritin complex to autolysosomes following starvation or iron depletion.

The protein resides in the cytoplasm. Its subcellular location is the lysosome. The protein localises to the cytoplasmic vesicle. It is found in the autophagosome. It carries out the reaction 4 Fe(2+) + O2 + 4 H(+) = 4 Fe(3+) + 2 H2O. In terms of biological role, stores iron in a soluble, non-toxic, readily available form. Important for iron homeostasis. Has ferroxidase activity. Iron is taken up in the ferrous form and deposited as ferric hydroxides after oxidation. Also plays a role in delivery of iron to cells. Mediates iron uptake in capsule cells of the developing kidney. Delivery to lysosomes is mediated by the cargo receptor NCOA4 for autophagic degradation and release of iron. The chain is Ferritin heavy chain (FTH1) from Ovis aries (Sheep).